A 152-amino-acid polypeptide reads, in one-letter code: Ribosome maturation factor RimP (152 aa).

This sequence belongs to the RimP family.

It is found in the cytoplasm. In terms of biological role, required for maturation of 30S ribosomal subunits. This is Ribosome maturation factor RimP from Proteus mirabilis (strain HI4320).